The chain runs to 88 residues: Small ribosomal subunit protein eS21 (88 aa).

Belongs to the eukaryotic ribosomal protein eS21 family. Component of the 40S small ribosomal subunit.

It is found in the cytoplasm. The protein localises to the cytosol. It localises to the rough endoplasmic reticulum. The chain is Small ribosomal subunit protein eS21 (rps-21) from Caenorhabditis elegans.